Consider the following 840-residue polypeptide: MTQAALAMSMTDPIDTTADAGLMARIDSACQRIAPLWPLKHFVAVNPFLGFTGQSFAATAATFERVVRTRMLMPRAFYRQALDDGRIDDAALAQALGAHPSTGLELNELKQKARAEAGTSSPPAVVATVAEVLDRLAEGDRYVSLVAFMIDEISAFCATYFDEGQASWPSPVRKLKPYAAWRTIAAYDRNPEVMGLTGFRKAIAELPADPVQAIGVIVDRLGIPERAVEDYLVRALFDLGGWSAYARYIGWSAGLDGQRDDTLLELLAIRLAWGYALYQARTDDAFKAAWAQAMAEAAKLPADQRLEETPELAIDLVLHEAYEIALRSKLVARLAGHGAQAVTRLPARPPVQAAFCIDVRSEIFRRALETAYPDAETIGFAGFFGFPIEYVPIGHSKGGAQCPVLLKPAFIVCEAVKDADDVEQSEVLGLRLLRRRAAKALKSFKVSAVSSFSFVETAGLGFAAKIATDSAGVTRPVPSPVVDGLDPEIAARVQPRLTPGELAGRATGFTDPQRVAMAEAVLKAMSLTGPFARLVLLAGHGSTTVNNPHASGLDCGACGGHTGEANARVAAAVLNDWQVREGLRAKGIDIPADCWFIGALHDTTTDDVTLFDEDDVPATLAQDLARLKARLTEAARLARLERSALLGISNKAAVDEAVIARSRDWSQVRPEWGLAGNTAFIAAPRSFTRGLNLGGRAFLHSYEAARDDGHRTLELIMTAPMVVASWINLQYYGSTVNNAAFGSGNKVLHNIVGQLGVLEGNAGDLRVGLPWQSVHDGSRLIHEPVRLNVFIAAPEAAMDEIMQRHQGVRDLVVNGWVMLHSLSDQGTIRRCVRPGEWRSA.

Zn(2+) is bound by residues cysteine 356, aspartate 358, histidine 540, and cysteine 555.

The protein belongs to the inorganic carbon transporter (TC 9.A.2) DabA family. As to quaternary structure, forms a complex with DabB. Zn(2+) is required as a cofactor.

It localises to the cell inner membrane. Part of an energy-coupled inorganic carbon pump. The protein is Probable inorganic carbon transporter subunit DabA 2 of Bradyrhizobium sp. (strain ORS 278).